Reading from the N-terminus, the 255-residue chain is Proteasome subunit alpha type-3 (255 aa).

S2 is modified (N-acetylserine). Residues K57, K206, and K230 each carry the N6-acetyllysine modification. Phosphoserine occurs at positions 243 and 250.

Belongs to the peptidase T1A family. In terms of assembly, the 26S proteasome consists of a 20S proteasome core and two 19S regulatory subunits. The 20S proteasome core is a barrel-shaped complex made of 28 subunits that are arranged in four stacked rings. The two outer rings are each formed by seven alpha subunits, and the two inner rings are formed by seven beta subunits. The proteolytic activity is exerted by three beta-subunits PSMB5, PSMB6 and PSMB7. Interacts with AURKB. Interacts with CDKN1A. Interacts with MDM2 and RB1. Interacts with the C-terminus of TBXA2R isoform 2. Interacts with DNAJB2. As to expression, detected in liver (at protein level).

The protein resides in the cytoplasm. It is found in the nucleus. Component of the 20S core proteasome complex involved in the proteolytic degradation of most intracellular proteins. This complex plays numerous essential roles within the cell by associating with different regulatory particles. Associated with two 19S regulatory particles, forms the 26S proteasome and thus participates in the ATP-dependent degradation of ubiquitinated proteins. The 26S proteasome plays a key role in the maintenance of protein homeostasis by removing misfolded or damaged proteins that could impair cellular functions, and by removing proteins whose functions are no longer required. Associated with the PA200 or PA28, the 20S proteasome mediates ubiquitin-independent protein degradation. This type of proteolysis is required in several pathways including spermatogenesis (20S-PA200 complex) or generation of a subset of MHC class I-presented antigenic peptides (20S-PA28 complex). Binds to the C-terminus of CDKN1A and thereby mediates its degradation. Negatively regulates the membrane trafficking of the cell-surface thromboxane A2 receptor (TBXA2R) isoform 2. The protein is Proteasome subunit alpha type-3 (Psma3) of Mus musculus (Mouse).